We begin with the raw amino-acid sequence, 345 residues long: Quinolinate synthase (345 aa).

Iminosuccinate-binding residues include H69 and S87. A [4Fe-4S] cluster-binding site is contributed by C132. Residues 158 to 160 (YVN) and S175 contribute to the iminosuccinate site. [4Fe-4S] cluster is bound at residue C217. Iminosuccinate-binding positions include 243-245 (HPE) and T260. C303 provides a ligand contact to [4Fe-4S] cluster.

Belongs to the quinolinate synthase family. Type 2 subfamily. [4Fe-4S] cluster serves as cofactor.

The protein resides in the cytoplasm. It carries out the reaction iminosuccinate + dihydroxyacetone phosphate = quinolinate + phosphate + 2 H2O + H(+). It participates in cofactor biosynthesis; NAD(+) biosynthesis; quinolinate from iminoaspartate: step 1/1. Functionally, catalyzes the condensation of iminoaspartate with dihydroxyacetone phosphate to form quinolinate. The sequence is that of Quinolinate synthase from Agrobacterium fabrum (strain C58 / ATCC 33970) (Agrobacterium tumefaciens (strain C58)).